The primary structure comprises 397 residues: 1-deoxy-D-xylulose 5-phosphate reductoisomerase (397 aa).

NADPH-binding residues include T10, G11, S12, I13, G36, N38, and N128. K129 serves as a coordination point for 1-deoxy-D-xylulose 5-phosphate. E130 is an NADPH binding site. D154 provides a ligand contact to Mn(2+). S155, E156, S180, and H203 together coordinate 1-deoxy-D-xylulose 5-phosphate. E156 lines the Mn(2+) pocket. Residue G209 coordinates NADPH. 1-deoxy-D-xylulose 5-phosphate is bound by residues N221, K222, and E225. E225 is a Mn(2+) binding site.

This sequence belongs to the DXR family. Requires Mg(2+) as cofactor. Mn(2+) is required as a cofactor.

It catalyses the reaction 2-C-methyl-D-erythritol 4-phosphate + NADP(+) = 1-deoxy-D-xylulose 5-phosphate + NADPH + H(+). Its pathway is isoprenoid biosynthesis; isopentenyl diphosphate biosynthesis via DXP pathway; isopentenyl diphosphate from 1-deoxy-D-xylulose 5-phosphate: step 1/6. Catalyzes the NADPH-dependent rearrangement and reduction of 1-deoxy-D-xylulose-5-phosphate (DXP) to 2-C-methyl-D-erythritol 4-phosphate (MEP). In Solibacter usitatus (strain Ellin6076), this protein is 1-deoxy-D-xylulose 5-phosphate reductoisomerase.